Reading from the N-terminus, the 1128-residue chain is MMPMFLTVYLSNSEQHFTEVPVTPETICRDVVDLCKEPGENDCHLAEVWCGSERPVADNERMFDVLQRFGSQRNEVRFFLRHERPPNRDIVSGPRSQDPSVKRNGVKVPGEHRRKENGVNSPRLDLTLAELQEMASRQQQQIEAQQQMLATKEQRLKFLKQQDQRQQQQAAEQEKLKRLREIAESQEAKLKKVRALKGHVEQKRLSNGKLVEEIEQMNSLFQQKQRELVLAVSKVEELTRQLEMLKNGRIDGHHDNQSAVAELDRLYKELQLRNKLNQEQNAKLQQQRECLNKRNSEVAVMDKRVSELRDRLWKKKAALQQKENLPVSPDGNLPQQAVSAPSRVAAVGPYIQSSTMPRMPSRPELLVKPALPDGSLLMQSAEGPMKIQTLPNMRSGAASQSKGSKAHPASPDWNPSNADLLPSQGSSVPQSAGTALDQVDDGEIAVREKEKKVRPFSMFDTVDQCAAPPSFGTLRKNQSSEDILRDAQAVNKNVAKVPPPVPTKPKQIHLPYFGQTAQSPSDMKPDGNAQQLPIAATSVGAKLKPAGPQARMLLSPGAPSGGQDQVLSPASKQESPPAAAVRPFTPQPSKDTFPPAFRKPQTVAASSIYSMYTQQQAPGKNFQQAVQSALTKTQPRGPHFSSVYGKPVIAAAQNPQQHPENIYSCSQGKPGSPEPETETVSSVHESHENERIPRPLSPTKLLPFLSNPYRNQSDADLEALRKKLSNAPRPLKKRSSITEPEGPNGPNIQKLLYQRTTIAAMETISVPSHPSKSPGSVTVNPESSVEIPNPYLHVEPEKEVGSLVPEPLSPEDMGSASTENSDVPAPSAGLEYVSEGVTDSSTNLQNNVEETNPEAPHLLEVYLEEYPPYPPPPYPSGEPEVSEEDSARMRPPEITGQVSLPPGKRTNLRKTGSERIAHGMRVKFNPLALLLDSSLEGEFDLVQRIIYEVDDPSLPNDEGITALHNAVCAGHTEIVKFLVQFGVNVNAADSDGWTPLHCAASCNNVQVCKFLVESGAAVFAMTYSDMQTAADKCEEMEEGYTQCSQFLYGVQEKMGIMNKGVIYALWDYEPQHDDELLMKEGDCMTVIRREDEEEIEWWWARLNDKEGYVPRNLLGLYPRIKPRQRSLA.

Residues proline 85–asparagine 120 are disordered. Residues asparagine 332–glycine 348 form an interaction with APPBP1 region. The disordered stretch occupies residues methionine 393–leucine 436. Polar residues predominate over residues tryptophan 413–glycine 433. Phosphoserine is present on residues serine 479, serine 555, serine 568, serine 571, and serine 575. 2 disordered regions span residues glutamine 549–alanine 596 and asparagine 654–leucine 705. Positions glycine 562–glutamate 574 are enriched in polar residues. Residues asparagine 654–lysine 669 show a composition bias toward polar residues. Residues histidine 684 to proline 693 show a composition bias toward basic and acidic residues. Phosphoserine occurs at positions 697, 713, and 736. 3 disordered regions span residues lysine 723–isoleucine 748, serine 802–proline 824, and proline 870–asparagine 907. Positions tyrosine 866 to proline 875 match the SH3-binding motif. The interval serine 876–alanine 1128 is mediates interaction with APC2. ANK repeat units follow at residues glutamate 958–alanine 987 and aspartate 991–alanine 1020. Residues methionine 1057 to arginine 1119 enclose the SH3 domain.

Belongs to the ASPP family. As to quaternary structure, interacts with P53/TP53; the interaction promotes pro-apoptotic activity. Interacts with BCL2. Interacts with protein phosphatase 1. Interacts with RELA NF-kappa-B subunit. This interaction probably prevents the activation of apoptosis, possibly by preventing its interaction with p53/TP53. Interacts with APC2 and APPBP1. Interacts with DDX42 (via the C-terminus); the interaction is not inhibited by TP53BP2 ubiquitination and is independent of p53/TP53.

The protein localises to the cytoplasm. It is found in the perinuclear region. The protein resides in the nucleus. In terms of biological role, regulator that plays a central role in regulation of apoptosis and cell growth via its interactions with proteins such as TP53. Regulates p53/TP53 by enhancing the DNA binding and transactivation function of p53/TP53 on the promoters of proapoptotic genes in vivo. Inhibits the ability of APPBP1 to conjugate NEDD8 to CUL1, and thereby decreases APPBP1 ability to induce apoptosis. Impedes cell cycle progression at G2/M. Its apoptosis-stimulating activity is inhibited by its interaction with DDX42. The chain is Apoptosis-stimulating of p53 protein 2 (Tp53bp2) from Mus musculus (Mouse).